The chain runs to 194 residues: Peptidyl-tRNA hydrolase (194 aa).

Tyr-17 provides a ligand contact to tRNA. His-22 functions as the Proton acceptor in the catalytic mechanism. Residues Phe-68, Asn-70, and Asn-116 each coordinate tRNA.

This sequence belongs to the PTH family. Monomer.

It localises to the cytoplasm. The catalysed reaction is an N-acyl-L-alpha-aminoacyl-tRNA + H2O = an N-acyl-L-amino acid + a tRNA + H(+). Functionally, hydrolyzes ribosome-free peptidyl-tRNAs (with 1 or more amino acids incorporated), which drop off the ribosome during protein synthesis, or as a result of ribosome stalling. In terms of biological role, catalyzes the release of premature peptidyl moieties from peptidyl-tRNA molecules trapped in stalled 50S ribosomal subunits, and thus maintains levels of free tRNAs and 50S ribosomes. The polypeptide is Peptidyl-tRNA hydrolase (Haemophilus influenzae (strain PittGG)).